The primary structure comprises 275 residues: Hydroxyethylthiazole kinase (275 aa).

Residue methionine 50 coordinates substrate. Arginine 126 and serine 171 together coordinate ATP. Position 200 (alanine 200) interacts with substrate.

It belongs to the Thz kinase family. The cofactor is Mg(2+).

The catalysed reaction is 5-(2-hydroxyethyl)-4-methylthiazole + ATP = 4-methyl-5-(2-phosphooxyethyl)-thiazole + ADP + H(+). It functions in the pathway cofactor biosynthesis; thiamine diphosphate biosynthesis; 4-methyl-5-(2-phosphoethyl)-thiazole from 5-(2-hydroxyethyl)-4-methylthiazole: step 1/1. Its function is as follows. Catalyzes the phosphorylation of the hydroxyl group of 4-methyl-5-beta-hydroxyethylthiazole (THZ). The chain is Hydroxyethylthiazole kinase from Acinetobacter baumannii (strain SDF).